Here is a 361-residue protein sequence, read N- to C-terminus: Phospho-N-acetylmuramoyl-pentapeptide-transferase (361 aa).

10 consecutive transmembrane segments (helical) span residues 28 to 48, 74 to 94, 99 to 119, 135 to 155, 167 to 187, 203 to 223, 236 to 256, 263 to 283, 288 to 308, and 338 to 358; these read LAVL…IKFL, TMGG…LADL, IWIT…DDYA, LLLQ…TIDS, SLSM…IVGA, VPIA…GNLI, TGEL…FLWF, VFMG…ISVI, IVLG…IMQV, and KVVI…LSSL.

Belongs to the glycosyltransferase 4 family. MraY subfamily. It depends on Mg(2+) as a cofactor.

The protein localises to the cell inner membrane. The catalysed reaction is UDP-N-acetyl-alpha-D-muramoyl-L-alanyl-gamma-D-glutamyl-meso-2,6-diaminopimeloyl-D-alanyl-D-alanine + di-trans,octa-cis-undecaprenyl phosphate = di-trans,octa-cis-undecaprenyl diphospho-N-acetyl-alpha-D-muramoyl-L-alanyl-D-glutamyl-meso-2,6-diaminopimeloyl-D-alanyl-D-alanine + UMP. Its pathway is cell wall biogenesis; peptidoglycan biosynthesis. Its function is as follows. Catalyzes the initial step of the lipid cycle reactions in the biosynthesis of the cell wall peptidoglycan: transfers peptidoglycan precursor phospho-MurNAc-pentapeptide from UDP-MurNAc-pentapeptide onto the lipid carrier undecaprenyl phosphate, yielding undecaprenyl-pyrophosphoryl-MurNAc-pentapeptide, known as lipid I. In Rickettsia bellii (strain OSU 85-389), this protein is Phospho-N-acetylmuramoyl-pentapeptide-transferase.